Reading from the N-terminus, the 532-residue chain is Peptide chain release factor 3 (532 aa).

Residues 10–283 (QKRRTFAIIS…GILDWAPSPV (274 aa)) form the tr-type G domain. Residues 19–26 (SHPDAGKT), 87–91 (DTPGH), and 141–144 (NKLD) contribute to the GTP site.

It belongs to the TRAFAC class translation factor GTPase superfamily. Classic translation factor GTPase family. PrfC subfamily.

It is found in the cytoplasm. Increases the formation of ribosomal termination complexes and stimulates activities of RF-1 and RF-2. It binds guanine nucleotides and has strong preference for UGA stop codons. It may interact directly with the ribosome. The stimulation of RF-1 and RF-2 is significantly reduced by GTP and GDP, but not by GMP. The protein is Peptide chain release factor 3 (prfC) of Buchnera aphidicola subsp. Baizongia pistaciae (strain Bp).